The following is a 228-amino-acid chain: 2,3-bisphosphoglycerate-dependent phosphoglycerate mutase (228 aa).

Substrate is bound by residues 8-15 (RHGQSEWN), 21-22 (TG), arginine 60, 87-90 (ERHY), lysine 98, 114-115 (RR), and 180-181 (GN). Residue histidine 9 is the Tele-phosphohistidine intermediate of the active site. Glutamate 87 functions as the Proton donor/acceptor in the catalytic mechanism.

This sequence belongs to the phosphoglycerate mutase family. BPG-dependent PGAM subfamily. Homodimer.

The catalysed reaction is (2R)-2-phosphoglycerate = (2R)-3-phosphoglycerate. The protein operates within carbohydrate degradation; glycolysis; pyruvate from D-glyceraldehyde 3-phosphate: step 3/5. Catalyzes the interconversion of 2-phosphoglycerate and 3-phosphoglycerate. This Zymomonas mobilis subsp. mobilis (strain ATCC 31821 / ZM4 / CP4) protein is 2,3-bisphosphoglycerate-dependent phosphoglycerate mutase.